Consider the following 95-residue polypeptide: Putative defensin-like protein 262 (95 aa).

The signal sequence occupies residues 1–26; it reads MEKTSLKLIFLFSLTVIAFCSSLGDA. Intrachain disulfides connect Cys48–Cys95, Cys64–Cys83, Cys70–Cys91, and Cys74–Cys93.

Belongs to the DEFL family.

It is found in the secreted. This is Putative defensin-like protein 262 from Arabidopsis thaliana (Mouse-ear cress).